The primary structure comprises 571 residues: FAD-linked oxidoreductase patO (571 aa).

A signal peptide spans 1 to 23 (MRLHQSPPRLLVCILSVLQVSAG). Residues N47, N101, N125, N179, N341, N374, N380, N421, N445, and N480 are each glycosylated (N-linked (GlcNAc...) asparagine). Residues 115–294 (TLGAMVRYAV…YAVTVKTFPD (180 aa)) enclose the FAD-binding PCMH-type domain.

This sequence belongs to the oxygen-dependent FAD-linked oxidoreductase family. Requires FAD as cofactor.

It localises to the vacuole lumen. It functions in the pathway mycotoxin biosynthesis; patulin biosynthesis. Its function is as follows. FAD-linked oxidoreductase; part of the gene cluster that mediates the biosynthesis of patulin, an acetate-derived tetraketide mycotoxin produced by several fungal species that shows antimicrobial properties against several bacteria. PatO acts with patJ in the vacuole to convert gentisyl alcohol to isoepoxydon. The pathway begins with the synthesis of 6-methylsalicylic acid by the polyketide synthase (PKS) patK via condensation of acetate and malonate units. The 6-methylsalicylic acid decarboxylase patG then catalyzes the decarboxylation of 6-methylsalicylic acid to yield m-cresol (also known as 3-methylphenol). These first reactions occur in the cytosol. The intermediate m-cresol is then transported into the endoplasmic reticulum where the cytochrome P450 monooxygenase patH converts it to m-hydroxybenzyl alcohol, which is further converted to gentisyl alcohol by the cytochrome P450 monooxygenase patI. The oxidoreductases patJ and patO further convert gentisyl alcohol to isoepoxydon in the vacuole. PatN catalyzes then the transformation of isoepoxydon into phyllostine. The cluster protein patF is responsible for the conversion from phyllostine to neopatulin whereas the alcohol dehydrogenase patD converts neopatulin to E-ascladiol. The steps between isoepoxydon and E-ascladiol occur in the cytosol, and E-ascladiol is probably secreted to the extracellular space by one of the cluster-specific transporters patC or patM. Finally, the secreted patulin synthase patE catalyzes the conversion of E-ascladiol to patulin. The polypeptide is FAD-linked oxidoreductase patO (Penicillium expansum (Blue mold rot fungus)).